The chain runs to 231 residues: Cytochrome c oxidase subunit 2 (231 aa).

Residues 1 to 14 (MATPAQLGLQNATS) are Mitochondrial intermembrane-facing. A helical membrane pass occupies residues 15–45 (PIMEELIAFHDHALMIIFLISSLVLYIISLM). The Mitochondrial matrix portion of the chain corresponds to 46–59 (LTTKLTHTSTMNAQ). Residues 60-87 (EIEMIWTILPAIILIMIALPSLRILYMT) traverse the membrane as a helical segment. At 88 to 231 (DEFNKPYLTL…WASYLYIVSL (144 aa)) the chain is on the mitochondrial intermembrane side. Residues histidine 161, cysteine 196, glutamate 198, cysteine 200, histidine 204, and methionine 207 each contribute to the Cu cation site. Glutamate 198 is a binding site for Mg(2+).

It belongs to the cytochrome c oxidase subunit 2 family. As to quaternary structure, component of the cytochrome c oxidase (complex IV, CIV), a multisubunit enzyme composed of 14 subunits. The complex is composed of a catalytic core of 3 subunits MT-CO1, MT-CO2 and MT-CO3, encoded in the mitochondrial DNA, and 11 supernumerary subunits COX4I, COX5A, COX5B, COX6A, COX6B, COX6C, COX7A, COX7B, COX7C, COX8 and NDUFA4, which are encoded in the nuclear genome. The complex exists as a monomer or a dimer and forms supercomplexes (SCs) in the inner mitochondrial membrane with NADH-ubiquinone oxidoreductase (complex I, CI) and ubiquinol-cytochrome c oxidoreductase (cytochrome b-c1 complex, complex III, CIII), resulting in different assemblies (supercomplex SCI(1)III(2)IV(1) and megacomplex MCI(2)III(2)IV(2)). Found in a complex with TMEM177, COA6, COX18, COX20, SCO1 and SCO2. Interacts with TMEM177 in a COX20-dependent manner. Interacts with COX20. Interacts with COX16. Cu cation serves as cofactor.

The protein resides in the mitochondrion inner membrane. The enzyme catalyses 4 Fe(II)-[cytochrome c] + O2 + 8 H(+)(in) = 4 Fe(III)-[cytochrome c] + 2 H2O + 4 H(+)(out). Its function is as follows. Component of the cytochrome c oxidase, the last enzyme in the mitochondrial electron transport chain which drives oxidative phosphorylation. The respiratory chain contains 3 multisubunit complexes succinate dehydrogenase (complex II, CII), ubiquinol-cytochrome c oxidoreductase (cytochrome b-c1 complex, complex III, CIII) and cytochrome c oxidase (complex IV, CIV), that cooperate to transfer electrons derived from NADH and succinate to molecular oxygen, creating an electrochemical gradient over the inner membrane that drives transmembrane transport and the ATP synthase. Cytochrome c oxidase is the component of the respiratory chain that catalyzes the reduction of oxygen to water. Electrons originating from reduced cytochrome c in the intermembrane space (IMS) are transferred via the dinuclear copper A center (CU(A)) of subunit 2 and heme A of subunit 1 to the active site in subunit 1, a binuclear center (BNC) formed by heme A3 and copper B (CU(B)). The BNC reduces molecular oxygen to 2 water molecules using 4 electrons from cytochrome c in the IMS and 4 protons from the mitochondrial matrix. This Aotus nigriceps (Black-headed night monkey) protein is Cytochrome c oxidase subunit 2 (MT-CO2).